The following is a 358-amino-acid chain: NADH-quinone oxidoreductase subunit H (358 aa).

Helical transmembrane passes span 29-49 (LIKIICVVLPLLGAVAYLTLW), 95-115 (GLFYLGPVMAIMPALGAWAVI), 130-150 (LLLVMAITSIEVYGVIIAGWA), 176-196 (FCFLVVIMVSGSMNLTEIVAV), 206-226 (GLGFLSWNWLPLFPIFIVYLI), 258-280 (GFAIFFLAEYASMWLVSILAVVM), 297-317 (GWIWLGIKTFLVVSMFIWIRA), and 334-354 (IFIPVTLVWLLVVGAWLLSPW).

The protein belongs to the complex I subunit 1 family. NDH-1 is composed of 14 different subunits. Subunits NuoA, H, J, K, L, M, N constitute the membrane sector of the complex.

The protein resides in the cell inner membrane. The enzyme catalyses a quinone + NADH + 5 H(+)(in) = a quinol + NAD(+) + 4 H(+)(out). Its function is as follows. NDH-1 shuttles electrons from NADH, via FMN and iron-sulfur (Fe-S) centers, to quinones in the respiratory chain. The immediate electron acceptor for the enzyme in this species is believed to be ubiquinone. Couples the redox reaction to proton translocation (for every two electrons transferred, four hydrogen ions are translocated across the cytoplasmic membrane), and thus conserves the redox energy in a proton gradient. This subunit may bind ubiquinone. This Acidovorax sp. (strain JS42) protein is NADH-quinone oxidoreductase subunit H.